Here is a 212-residue protein sequence, read N- to C-terminus: Peptide methionine sulfoxide reductase MsrA (212 aa).

Cys52 is a catalytic residue.

This sequence belongs to the MsrA Met sulfoxide reductase family.

It catalyses the reaction L-methionyl-[protein] + [thioredoxin]-disulfide + H2O = L-methionyl-(S)-S-oxide-[protein] + [thioredoxin]-dithiol. It carries out the reaction [thioredoxin]-disulfide + L-methionine + H2O = L-methionine (S)-S-oxide + [thioredoxin]-dithiol. Functionally, has an important function as a repair enzyme for proteins that have been inactivated by oxidation. Catalyzes the reversible oxidation-reduction of methionine sulfoxide in proteins to methionine. This chain is Peptide methionine sulfoxide reductase MsrA, found in Escherichia coli (strain SMS-3-5 / SECEC).